Here is a 634-residue protein sequence, read N- to C-terminus: Growth hormone receptor (634 aa).

The signal sequence occupies residues 1–18; it reads MDLWQLLLTLAVAGSSDA. The Extracellular portion of the chain corresponds to 19 to 260; that stretch reads FSGSEATPAF…NPSACEEDFQ (242 aa). N46 carries an N-linked (GlcNAc...) asparagine glycan. C56 and C66 are oxidised to a cystine. N-linked (GlcNAc...) asparagine glycosylation is present at N73. A disulfide bridge links C97 with C108. The N-linked (GlcNAc...) asparagine glycan is linked to N111. A disulfide bond links C122 and C136. Residues 147 to 250 form the Fibronectin type-III domain; it reads PPVGLNWTLL…EVLLITFPQM (104 aa). N152, N157, and N196 each carry an N-linked (GlcNAc...) asparagine glycan. The short motif at 236-240 is the WSXWS motif element; it reads YGKFS. A helical membrane pass occupies residues 261–284; the sequence is FPWFLIIMFGILGLAVTLFLLIFS. The Cytoplasmic portion of the chain corresponds to 285–634; the sequence is KQQRIKMLIL…STDQLNKIMP (350 aa). The interval 290–375 is required for JAK2 binding; the sequence is KMLILPPVPV…HEKSLNIFGA (86 aa). The Box 1 motif signature appears at 293–301; it reads ILPPVPVPK. The short motif at 336-345 is the UbE motif element; it reads DSWVEFIELD. S337 carries the post-translational modification Phosphoserine. Phosphotyrosine occurs at positions 483 and 591.

The protein belongs to the type I cytokine receptor family. Type 1 subfamily. As to quaternary structure, on growth hormone (GH) binding, forms homodimers and binds JAK2 via a box 1-containing domain. In terms of processing, the soluble form (GHBP) is produced by phorbol ester-promoted proteolytic cleavage at the cell surface (shedding) by ADAM17/TACE. Shedding is inhibited by growth hormone (GH) binding to the receptor probably due to a conformational change in GHR rendering the receptor inaccessible to ADAM17. On GH binding, phosphorylated on tyrosine residues in the cytoplasmic domain by JAK2. Post-translationally, ubiquitinated by the ECS(SOCS2) complex following ligand-binding and phosphorylation by JAK2, leading to its degradation by the proteasome. Regulation by the ECS(SOCS2) complex acts as a negative feedback loop of growth hormone receptor signaling. Ubiquitination is not sufficient for GHR internalization.

The protein localises to the cell membrane. It localises to the secreted. Its function is as follows. Receptor for pituitary gland growth hormone (GH1) involved in regulating postnatal body growth. On ligand binding, couples to the JAK2/STAT5 pathway. The soluble form (GHBP) acts as a reservoir of growth hormone in plasma and may be a modulator/inhibitor of GH signaling. This Bos indicus (Zebu) protein is Growth hormone receptor (GHR).